A 240-amino-acid chain; its full sequence is UDP-2,3-diacylglucosamine hydrolase (240 aa).

Positions 8, 10, 41, 79, and 114 each coordinate Mn(2+). 79–80 (NR) contacts substrate. 5 residues coordinate substrate: Asp-122, Ser-160, Asn-164, Lys-167, and His-195. Mn(2+) contacts are provided by His-195 and His-197.

It belongs to the LpxH family. Mn(2+) is required as a cofactor.

It localises to the cell inner membrane. The enzyme catalyses UDP-2-N,3-O-bis[(3R)-3-hydroxytetradecanoyl]-alpha-D-glucosamine + H2O = 2-N,3-O-bis[(3R)-3-hydroxytetradecanoyl]-alpha-D-glucosaminyl 1-phosphate + UMP + 2 H(+). Its pathway is glycolipid biosynthesis; lipid IV(A) biosynthesis; lipid IV(A) from (3R)-3-hydroxytetradecanoyl-[acyl-carrier-protein] and UDP-N-acetyl-alpha-D-glucosamine: step 4/6. In terms of biological role, hydrolyzes the pyrophosphate bond of UDP-2,3-diacylglucosamine to yield 2,3-diacylglucosamine 1-phosphate (lipid X) and UMP by catalyzing the attack of water at the alpha-P atom. Involved in the biosynthesis of lipid A, a phosphorylated glycolipid that anchors the lipopolysaccharide to the outer membrane of the cell. This is UDP-2,3-diacylglucosamine hydrolase from Shigella dysenteriae serotype 1 (strain Sd197).